Here is a 103-residue protein sequence, read N- to C-terminus: MYALVEINGKQYKAVEGEFLKIDKISPIEKEKLEFNSVLLINKDGEIKIGKPYVINSSIKCTYKEDKKDKKVVSYRYRRRKSSERKVGHRQTYSYILVDEIVF.

The protein belongs to the bacterial ribosomal protein bL21 family. In terms of assembly, part of the 50S ribosomal subunit. Contacts protein L20.

In terms of biological role, this protein binds to 23S rRNA in the presence of protein L20. The sequence is that of Large ribosomal subunit protein bL21 from Borreliella afzelii (strain PKo) (Borrelia afzelii).